A 942-amino-acid polypeptide reads, in one-letter code: MSWLNNPSQNFVDPFIRIKCILGDDIRIIKFNSNISYGGLMNQLEQDFQCPISIHQYEDYEGDKVTVKSKDDIMEALTMYFELKALNPTKIISTKFFLKQLPPQSQPLSSSLSPTQSLILNNNNNNNNNNNNNNNNNNNNNNNNIIQHTDFPSLIINEHEELISNHNIKWQKGQILGRGGYGSVYLGLNKDTGELFAVKQLEIVDINSDPKLKNMILSFSKEIEVMRSLRHDNIVRYLGTSLDQSFLSVFLEYIPGGSISSLLGKFGAFSENVIKVYTKQILQGLSFLHANSIIHRDIKGANILIDTKGIVKLSDFGCSKSFSGIVSQFKSMQGTPYWMAPEVIKQTGHGRSSDIWSLGCVIVEMATAQPPWSNITELAAVMYHIASSNSIPNIPSHMSQEAFDFLNLCFKRDPKERPDANQLLKHPFIMNLDDNIQLPTISPTTTLSTNTTNTTATTTTTNNATNSNINQQQQQQQQQPPTRTQRVSISAGSSNNKRYTPPISTSTSSSSSSILNNFSINIILPINLIILIFREIKPNFVNTLSRVCKHWKQIIDDDELWNKYCSDRLINKSKFEESITWKSNYIKIYKQQKVWFHNKLNHSTLKGHDKGVFCVKLIDDQGMVLSGGEDKKLKVWDISGNHHHNHHSGIVGSISKKSGLNIINNNNSNNSNSSSNSSSSNSRYLFSLKGHSGCIKSVDYQRQSGSDVSRVFTASADFTCKIFSLKTKKTLFTYTNHQEAVTCINYLGDVENKCITSSLDKTIQLWDAETGSCLSTLRGHTGGIYCVKTDQVATHGNGYNHLVVSASVDKTSNVWDTRSSSKVRSFTQHTEDVLCCYVFDQKVVTGSCDGTIKLWDIGTGKTISTFIPSETRQKNYVWTVQFDQSKIISSGKTGIIRIWDIYNERDSRSIGGHHETIFSLQFNNQKLITGSLDKLVKIWSID.

The region spanning 15–96 (FIRIKCILGD…NPTKIISTKF (82 aa)) is the PB1 domain. The segment at 107–144 (PLSSSLSPTQSLILNNNNNNNNNNNNNNNNNNNNNNNN) is disordered. Residues 170–429 (WQKGQILGRG…ANQLLKHPFI (260 aa)) form the Protein kinase domain. ATP contacts are provided by residues 176–184 (LGRGGYGSV) and lysine 199. The active-site Proton acceptor is the aspartate 297. Residues 441 to 486 (ISPTTTLSTNTTNTTATTTTTNNATNSNINQQQQQQQQQPPTRTQR) show a composition bias toward low complexity. The disordered stretch occupies residues 441-512 (ISPTTTLSTN…ISTSTSSSSS (72 aa)). The span at 487–498 (VSISAGSSNNKR) shows a compositional bias: polar residues. A compositionally biased stretch (low complexity) spans 500–512 (TPPISTSTSSSSS). The chain crosses the membrane as a helical span at residues 513-533 (SILNNFSINIILPINLIILIF). In terms of domain architecture, F-box spans 518 to 564 (FSINIILPINLIILIFREIKPNFVNTLSRVCKHWKQIIDDDELWNKY). 7 WD repeats span residues 607–646 (GHDK…HHNH), 690–733 (GHSG…TLFT), 736–778 (NHQE…STLR), 780–825 (HTGG…KVRS), 828–865 (QHTE…TIST), 872–909 (RQKN…DSRS), and 912–942 (GHHE…WSID).

This sequence belongs to the protein kinase superfamily. STE Ser/Thr protein kinase family. MAP kinase kinase kinase subfamily. As to quaternary structure, interacts with ubcB and ubpB. Mg(2+) is required as a cofactor. UbcB and ubpB differentially control ubiquitination/deubiquitination and degradation in a cell-type-specific and temporally regulated manner.

It is found in the membrane. The enzyme catalyses L-seryl-[protein] + ATP = O-phospho-L-seryl-[protein] + ADP + H(+). The catalysed reaction is L-threonyl-[protein] + ATP = O-phospho-L-threonyl-[protein] + ADP + H(+). In terms of biological role, regulates cell-type differentiation and spatial patterning, required for the proper induction and maintenance of prespore cell differentiation. In Dictyostelium discoideum (Social amoeba), this protein is Mitogen-activated protein kinase kinase kinase A.